The following is a 72-amino-acid chain: Large ribosomal subunit protein bL31c (72 aa).

It belongs to the bacterial ribosomal protein bL31 family. Type A subfamily. As to quaternary structure, part of the 50S ribosomal subunit.

It is found in the plastid. It localises to the chloroplast. Its function is as follows. Binds the 23S rRNA. This Thalassiosira pseudonana (Marine diatom) protein is Large ribosomal subunit protein bL31c (rpl31).